A 434-amino-acid chain; its full sequence is Bestrophin homolog 12 (434 aa).

Helical transmembrane passes span 31–51 (KVILHEFLMTAGAYFGVFLVF), 76–96 (VCIPMQMMLAFFIATVADQWE), 244–264 (IPIPLAYPQAVFLAVRIYFFF), and 278–298 (WALSHWGFPLLTTLQFIFLVG).

Belongs to the anion channel-forming bestrophin (TC 1.A.46) family. Calcium-sensitive chloride channel subfamily. In terms of assembly, forms oligomers.

The protein resides in the cell membrane. In terms of biological role, forms chloride channels. In Caenorhabditis elegans, this protein is Bestrophin homolog 12 (best-12).